We begin with the raw amino-acid sequence, 161 residues long: Putative pre-16S rRNA nuclease (161 aa).

Belongs to the YqgF nuclease family.

The protein localises to the cytoplasm. Its function is as follows. Could be a nuclease involved in processing of the 5'-end of pre-16S rRNA. This Bradyrhizobium diazoefficiens (strain JCM 10833 / BCRC 13528 / IAM 13628 / NBRC 14792 / USDA 110) protein is Putative pre-16S rRNA nuclease.